A 141-amino-acid polypeptide reads, in one-letter code: Thioredoxin-like protein SkfH (141 aa).

A Thioredoxin domain is found at 2–141 (KDEQMLTEWP…DKMLKKIAGL (140 aa)). Cysteine 41 and cysteine 44 are joined by a disulfide.

Required for production of the bacteriocin SkfA. The chain is Thioredoxin-like protein SkfH from Bacillus subtilis (strain 168).